Here is a 376-residue protein sequence, read N- to C-terminus: Chaperone protein DnaJ (376 aa).

One can recognise a J domain in the interval 5-70 (DYYEVLGVAK…QKRAAYDQYG (66 aa)). The segment at 136–214 (GYDTQIRVPS…CHGSGKVKET (79 aa)) adopts a CR-type zinc-finger fold. The Zn(2+) site is built by C149, C152, C166, C169, C188, C191, C202, and C205. CXXCXGXG motif repeat units lie at residues 149–156 (CGICHGSG), 166–173 (CPTCHGQG), 188–195 (CPKCHGTG), and 202–209 (CVHCHGSG).

The protein belongs to the DnaJ family. As to quaternary structure, homodimer. Zn(2+) is required as a cofactor.

It is found in the cytoplasm. Participates actively in the response to hyperosmotic and heat shock by preventing the aggregation of stress-denatured proteins and by disaggregating proteins, also in an autonomous, DnaK-independent fashion. Unfolded proteins bind initially to DnaJ; upon interaction with the DnaJ-bound protein, DnaK hydrolyzes its bound ATP, resulting in the formation of a stable complex. GrpE releases ADP from DnaK; ATP binding to DnaK triggers the release of the substrate protein, thus completing the reaction cycle. Several rounds of ATP-dependent interactions between DnaJ, DnaK and GrpE are required for fully efficient folding. Also involved, together with DnaK and GrpE, in the DNA replication of plasmids through activation of initiation proteins. This chain is Chaperone protein DnaJ, found in Burkholderia thailandensis (strain ATCC 700388 / DSM 13276 / CCUG 48851 / CIP 106301 / E264).